Consider the following 361-residue polypeptide: Large ribosomal subunit protein uL3 (361 aa).

The span at 1–14 (MGRGGRRNPGRPRR) shows a compositional bias: basic residues. Disordered regions lie at residues 1–33 (MGRGGRRNPGRPRRGSLAFSPRKRASRPVPRIR) and 337–361 (TSQQGVRPKASEDEIVEQLGGPASA).

This sequence belongs to the universal ribosomal protein uL3 family. Part of the 50S ribosomal subunit. Forms a cluster with proteins L14 and L24e.

Its function is as follows. One of the primary rRNA binding proteins, it binds directly near the 3'-end of the 23S rRNA, where it nucleates assembly of the 50S subunit. This Methanopyrus kandleri (strain AV19 / DSM 6324 / JCM 9639 / NBRC 100938) protein is Large ribosomal subunit protein uL3.